A 388-amino-acid polypeptide reads, in one-letter code: Dauer abnormal formation protein 25 (388 aa).

3 ANK repeats span residues 40–69 (SGMS…DVND), 74–103 (TLYT…RMYL), and 107–137 (IGKT…DVIE). Residues C321, C324, C333, C336, C341, C345, H353, and C357 each coordinate Zn(2+). The MYND-type zinc finger occupies 321-357 (CSVCGHPGAKKRCTQCKLAYCSQECQKFDWPIHKKVC).

Expressed in many ciliated sensory neurons.

The protein localises to the cell projection. It localises to the cilium. Functionally, may be involved in the trafficking and dendritic transport of signaling proteins, such as the receptor-type guanylate cyclases gcy-12 and daf-11, to the cilia. In ciliated sensory neurons, required for the calcium flux to the cytoplasm in response to onset and removal of a nitric oxide (NO) stimulus and is thereby required for the behavioral avoidance response to NO-producing organisms like P.aeruginosa. This chain is Dauer abnormal formation protein 25 (daf-25), found in Caenorhabditis elegans.